Here is a 376-residue protein sequence, read N- to C-terminus: MAFCTSLGVMMETQLYIGIMSGTSMDGADAVLVRMDGGKWLGAEGHAFTPYPDRLRRKLLDLQDTGTDELHRSRMLSQELSRLYAQTAAELLCSQNLAPCDITALGCHGQTVRHAPEHGYSIQLADLPLLAELTRIFTVGDFRSRDLAAGGQGAPLVPAFHEALFRDDRETRVVLNIGGIANISVLPPGAPAFGFDTGPGNMLMDAWTQAHWQLPYDKNGAKAAQGNILPQLLGRLLAHPYFSQPHPKSTGRELFALNWLETYLDGGENRYDVLRTLSRFTAQTVCDAVSHAAADARQMYICGGGIRNPVLMADLAECFGTRVSLHSTAELNLDPQWVEAAAFAWLAACWINRIPGSPHKATGASKPCILGAGYYY.

An ATP-binding site is contributed by 22–29 (GTSMDGAD).

The protein belongs to the anhydro-N-acetylmuramic acid kinase family.

The enzyme catalyses 1,6-anhydro-N-acetyl-beta-muramate + ATP + H2O = N-acetyl-D-muramate 6-phosphate + ADP + H(+). Its pathway is amino-sugar metabolism; 1,6-anhydro-N-acetylmuramate degradation. The protein operates within cell wall biogenesis; peptidoglycan recycling. In terms of biological role, catalyzes the specific phosphorylation of 1,6-anhydro-N-acetylmuramic acid (anhMurNAc) with the simultaneous cleavage of the 1,6-anhydro ring, generating MurNAc-6-P. Is required for the utilization of anhMurNAc either imported from the medium or derived from its own cell wall murein, and thus plays a role in cell wall recycling. The sequence is that of Anhydro-N-acetylmuramic acid kinase from Neisseria gonorrhoeae (strain NCCP11945).